A 251-amino-acid chain; its full sequence is tRNA (guanine-N(1)-)-methyltransferase (251 aa).

S-adenosyl-L-methionine-binding positions include Gly-113 and 133-138 (IGDYVL).

It belongs to the RNA methyltransferase TrmD family. In terms of assembly, homodimer.

The protein resides in the cytoplasm. It carries out the reaction guanosine(37) in tRNA + S-adenosyl-L-methionine = N(1)-methylguanosine(37) in tRNA + S-adenosyl-L-homocysteine + H(+). Its function is as follows. Specifically methylates guanosine-37 in various tRNAs. This Pectobacterium atrosepticum (strain SCRI 1043 / ATCC BAA-672) (Erwinia carotovora subsp. atroseptica) protein is tRNA (guanine-N(1)-)-methyltransferase.